A 558-amino-acid chain; its full sequence is MKDFIEWKDFTFQYDVQSEPTLKGINLSIPKGEKVLILGPSGSGKSTLGHCLNGIIPNTHKGQYSGIFTINHKNAFDLSIYDKSHLVSTVLQDPDGQFIGLTVAEDIAFALENDVVAQEEMASIVEMWAKRLEIAPLLSKRPQDLSGGQKQRVSLAGVLVDDSPILLFDEPLANLDPQSGQDIMALVDRIHQEQDATTIIIEHRLEDVFYERVDRVVLFSDGQIIYNGEPDQLLKTNFLSEYGIREPLYISALKNLGYDFEKQNTMTSIDDFDFSELLIPKMRALDLDKHTDKLLSVQHLSVSYDLENNTLDDVSFDLYKGQRLAIVGKNGAGKSTLAKALCQFIPNNATLIYNNEDVSQDSIKERAERIGYVLQNPNQMISQAMVFDEVALGLRLRGFSDNDIESRVYDILKVCGLYQFRNWPISALSFGQKKRVTIASILILNPEVIILDEPTAGQDMKHYTEMMSFLDKLSCDGHTIVMITHDMQLMLEYTDRAIVIDNGLIVADDHPINILSNTELLKKTHLKKTSLFALADRLGISPQKLTQWYIDNQGGKNG.

ABC transporter domains lie at 5–246 (IEWK…GIRE) and 295–527 (LSVQ…THLK). ATP-binding positions include 39-46 (GPSGSGKS) and 328-335 (GKNGAGKS).

The protein belongs to the ABC transporter superfamily.

It localises to the cell membrane. In terms of biological role, probably part of an ABC transporter complex. Responsible for energy coupling to the transport system. The chain is Putative ABC transporter ATP-binding protein SAG1633 from Streptococcus agalactiae serotype V (strain ATCC BAA-611 / 2603 V/R).